Reading from the N-terminus, the 191-residue chain is UPF0669 protein C6orf120 homolog (191 aa).

The signal sequence occupies residues 1 to 30; sequence MAAPRGRAAPWTTALLLLLTSQILSPGSCA. The N-linked (GlcNAc...) asparagine glycan is linked to Asn-53.

This sequence belongs to the UPF0669 family.

It localises to the secreted. Functionally, may be involved in induction of apoptosis in CD4(+) T-cells, but not CD8(+) T-cells or hepatocytes. This Macaca fascicularis (Crab-eating macaque) protein is UPF0669 protein C6orf120 homolog.